The primary structure comprises 483 residues: Shutoff alkaline exonuclease (483 aa).

This sequence belongs to the herpesviridae alkaline nuclease family. As to quaternary structure, forms a complex with the DNA polymerase, the DNA polymerase processivity factor, and the major DNA binding protein.

It localises to the host nucleus. The protein resides in the host cytoplasm. Plays a role in processing non linear or branched viral DNA intermediates in order to promote the production of mature packaged unit-length linear progeny viral DNA molecules. Exhibits endonuclease and exonuclease activities and accepts both double-stranded and single-stranded DNA as substrate. Exonuclease digestion of DNA is in the 5'-&gt; 3' direction and the products are 5'-monophosphate nucleosides. Additionally, forms a recombinase with the major DNA-binding protein, which displays strand exchange activity. Also acts as a cytoplasmic RNA endonuclease that induces degradation of the majority of the cellular messenger RNAs during early lytic infection. The resulting inhibition of cellular protein synthesis serves to ensure maximal viral gene expression and evasion from host immune response. Internally cleaves host mRNAs which are then degraded by the cellular exonuclease XRN1. Bypasses therefore the regulatory steps of deadenylation and decapping normally required for XRN1 activation. In Saimiriine herpesvirus 2 (strain 11) (SaHV-2), this protein is Shutoff alkaline exonuclease (37).